Reading from the N-terminus, the 54-residue chain is Large ribosomal subunit protein bL33 (54 aa).

Belongs to the bacterial ribosomal protein bL33 family.

The sequence is that of Large ribosomal subunit protein bL33 from Corynebacterium urealyticum (strain ATCC 43042 / DSM 7109).